The primary structure comprises 106 residues: Movement protein TGB2 (106 aa).

Over 1–8 (MPLTPPPD) the chain is Cytoplasmic. A helical membrane pass occupies residues 9 to 29 (YTRVYTALAIGASIAFFTGLI). Over 30 to 73 (TRNTLPSVGDLQHNLPHGGRYRDGTKSVEYCGPRKLNSVESGSR) the chain is Lumenal. A helical transmembrane segment spans residues 74–94 (WTFQPWLLVIVLVALIIALGR). Residues 95–106 (QGHNCRACGRSH) lie on the Cytoplasmic side of the membrane.

This sequence belongs to the Tymovirales TGBp2 protein family.

It is found in the host endoplasmic reticulum membrane. Its function is as follows. Plays a role in viral cell-to-cell propagation, by facilitating genome transport to neighboring plant cells through plasmosdesmata,. The polypeptide is Movement protein TGB2 (Lilium (LSV)).